The primary structure comprises 618 residues: 1-deoxy-D-xylulose-5-phosphate synthase (618 aa).

Residues H72 and 113–115 (GHA) each bind thiamine diphosphate. Residue D144 participates in Mg(2+) binding. Residues 145-146 (GA), N173, H284, and E359 each bind thiamine diphosphate. N173 serves as a coordination point for Mg(2+).

This sequence belongs to the transketolase family. DXPS subfamily. Homodimer. Requires Mg(2+) as cofactor. Thiamine diphosphate is required as a cofactor.

The catalysed reaction is D-glyceraldehyde 3-phosphate + pyruvate + H(+) = 1-deoxy-D-xylulose 5-phosphate + CO2. Its pathway is metabolic intermediate biosynthesis; 1-deoxy-D-xylulose 5-phosphate biosynthesis; 1-deoxy-D-xylulose 5-phosphate from D-glyceraldehyde 3-phosphate and pyruvate: step 1/1. Its function is as follows. Catalyzes the acyloin condensation reaction between C atoms 2 and 3 of pyruvate and glyceraldehyde 3-phosphate to yield 1-deoxy-D-xylulose-5-phosphate (DXP). This chain is 1-deoxy-D-xylulose-5-phosphate synthase, found in Dictyoglomus thermophilum (strain ATCC 35947 / DSM 3960 / H-6-12).